A 771-amino-acid polypeptide reads, in one-letter code: Solute carrier family 7 member 14 (771 aa).

6 helical membrane-spanning segments follow: residues 58–78 (LISL…SGLV), 83–103 (AGPG…LSGV), 119–141 (AYTY…NLIL), 187–207 (YPDL…ALGV), 216–236 (VLNV…LFFI), and 251–271 (WSGV…FDII). Asn-282 carries an N-linked (GlcNAc...) asparagine glycan. Transmembrane regions (helical) follow at residues 291-311 (ASLV…TLMV), 336-356 (FVVA…SLFP), 384-404 (PVVA…LVSL), and 407-427 (LIEM…VCVL). Residues Ser-465, Ser-468, Ser-475, and Ser-488 each carry the phosphoserine modification. Transmembrane regions (helical) follow at residues 565-585 (VTIC…FIIF), 596-616 (WAIL…FVIL), 628-648 (MAPC…YLML), and 655-675 (WIRF…YGIW). An N-linked (GlcNAc...) asparagine glycan is attached at Asn-676. The tract at residues 735–771 (SDAKANSRTSSKAKSKSKHKQNSEALIANDELDCSPE) is disordered. Basic residues predominate over residues 745–754 (SKAKSKSKHK). Residues Ser-757 and Ser-769 each carry the phosphoserine modification.

This sequence belongs to the amino acid-polyamine-organocation (APC) superfamily. In terms of tissue distribution, expressed in retina, brain and spinal cord. In the retina, expressed in the inner nuclear layer and photoreceptor layer (at protein level). Expressed in liver, spleen, lung, kidney intestine and brain (at protein level).

The protein localises to the lysosome membrane. The catalysed reaction is 4-aminobutanoate(in) = 4-aminobutanoate(out). Its function is as follows. Imports 4-aminobutanoate (GABA) into lysosomes. May act as a GABA sensor that regulates mTORC2-dependent INS signaling and gluconeogenesis. The transport mechanism and substrate selectivity remain to be elucidated. The polypeptide is Solute carrier family 7 member 14 (Mus musculus (Mouse)).